Consider the following 164-residue polypeptide: MNELRQRWQAMSQRERQLMVVCAAVLLLCVVYYAILQPWQEREDLWERTISREQQTVNWMQKQASSIPRGNQAQGDNSQRDVSLPILISQSTKRYGLTVVRLQPQGSQASVTLGQSDFNSLLRWLGELEQKNGVKVISLDVNAVEQSPGIVDVTRLMLERTDEA.

The Cytoplasmic segment spans residues 1-17 (MNELRQRWQAMSQRERQ). The helical transmembrane segment at 18–38 (LMVVCAAVLLLCVVYYAILQP) threads the bilayer. The Periplasmic segment spans residues 39–164 (WQEREDLWER…RLMLERTDEA (126 aa)).

It belongs to the GSP M family. Type II secretion system is composed of four main components: the outer membrane complex, the inner membrane complex, the cytoplasmic secretion ATPase and the periplasm-spanning pseudopilus. Forms homodimers. Interacts with OutL/GspL. Interacts with OutE/GspE and OutF/GspF.

It is found in the cell inner membrane. Its function is as follows. Inner membrane component of the type II secretion system required for the energy-dependent secretion of extracellular factors such as proteases and toxins from the periplasm. Plays a role in the complex assembly and recruits OutL resulting in a stable complex in the inner membrane. Provides thus a link between the energy-providing OutE protein in the cytoplasm and the rest of the T2SS machinery. The polypeptide is Type II secretion system protein M (outM) (Pectobacterium carotovorum subsp. carotovorum (Erwinia carotovora subsp. carotovora)).